The primary structure comprises 243 residues: Probable transcriptional regulatory protein BG0025 (243 aa).

It belongs to the TACO1 family.

The protein localises to the cytoplasm. This is Probable transcriptional regulatory protein BG0025 from Borrelia garinii subsp. bavariensis (strain ATCC BAA-2496 / DSM 23469 / PBi) (Borreliella bavariensis).